We begin with the raw amino-acid sequence, 529 residues long: Corneodesmosin (529 aa).

Residues Met1–Ala32 form the signal peptide. 2 disordered regions span residues Phe38 to Gly248 and Gly383 to Gly492. 6 stretches are compositionally biased toward low complexity: residues Gly58 to Ser83, Gly90 to Gly100, Gly111 to Ala175, Pro189 to Pro231, Ser392 to Ser408, and Pro426 to Gly441. N-linked (GlcNAc...) asparagine glycosylation occurs at Asn172. Positions Gly449–Leu467 are enriched in polar residues.

Its subcellular location is the secreted. Functionally, important for the epidermal barrier integrity. This is Corneodesmosin (CDSN) from Pan troglodytes (Chimpanzee).